A 266-amino-acid polypeptide reads, in one-letter code: Short-chain dehydrogenase/reductase AacuF (266 aa).

L13, D57, and N85 together coordinate NADP(+). Active-site proton donor residues include S145 and Y164. Residues Y164, K168, and V198 each coordinate NADP(+). Residue K168 is the Lowers pKa of active site Tyr of the active site.

This sequence belongs to the short-chain dehydrogenases/reductases (SDR) family.

It participates in secondary metabolite biosynthesis. Functionally, short-chain dehydrogenase/reductase; part of the gene cluster that mediates the biosynthesis of the tetrahydroxanthone dimer secalonic acid D. The pathway begins with the synthesis of atrochrysone thioester by the polyketide synthase AacuL. The atrochrysone carboxyl ACP thioesterase AacuM then breaks the thioester bond and releases the atrochrysone carboxylic acid from AacuL. Atrochrysone carboxylic acid is decarboxylated by the decarboxylase AacuI, and oxidized by the anthrone oxygenase AacuG to yield emodin. Emodin is then reduced to emodin hydroquinone by a yet unidentified oxidoreductase. A-ring reduction by the short chain dehydrogenase AacuN, dehydration by the scytalone dehydratase-like protein AacuK and probable spontaneous re-oxidation, results in overall deoxygenation to chrysophanol. Baeyer-Villiger oxidation by the Baeyer-Villiger monooxygenase (BVMO) AacuH then yields monodictyphenone. Monodictyphenone is transformed into compounds with the tetrahydroxanthone skeleton via methylesterification by the methyltransferase AacuQ, followed by the action of the flavin-dependent monooxygenase AacuC, the isomerase AacuP, and the short chain dehydrogenase/reductase AacuF or AacuD. AacuF and AacuD should accept the same compound as a substrate but perform the ketoreduction with a different stereoselectivity, thus yielding blennolides B and A, respectively. In the final step of the biosynthesis, the cytochrome P450 monooxygenase AacuE accepts blennolide B and/or blennolide A to conduct the dimerization reaction to furnish the tetrahydroxanthone dimers, secalonic acids D, B, and F. The protein is Short-chain dehydrogenase/reductase AacuF of Aspergillus aculeatus (strain ATCC 16872 / CBS 172.66 / WB 5094).